The chain runs to 49 residues: Large ribosomal subunit protein bL33 (49 aa).

The protein belongs to the bacterial ribosomal protein bL33 family.

The chain is Large ribosomal subunit protein bL33 from Streptococcus suis (strain 98HAH33).